A 500-amino-acid polypeptide reads, in one-letter code: Ephrin type-B receptor 3 (500 aa).

The Fibronectin type-III domain maps to 1-64 (PLLVLDLIIQ…NPVDFSTSLY (64 aa)). At 1–113 (PLLVLDLIIQ…ERSVQDLLPL (113 aa)) the chain is on the extracellular side. The disordered stretch occupies residues 76-103 (HLRRREELTTTTTGLKSREERFQKSDDP). The span at 91 to 103 (KSREERFQKSDDP) shows a compositional bias: basic and acidic residues. A helical transmembrane segment spans residues 114-134 (IVGSASAGFVVILAMIVIAVV). Residues 135–500 (CLRRQRTGSE…QMSQTLPIRV (366 aa)) are Cytoplasmic-facing. Y168 is subject to Phosphotyrosine; by autocatalysis. In terms of domain architecture, Protein kinase spans 187-450 (VKIEEVIGAG…QIVSTLDKFL (264 aa)). Residues 193-201 (IGAGEFGEV) and K219 contribute to the ATP site. D312 acts as the Proton acceptor in catalysis. Residues 421 to 500 (LHQLMLECWV…QMSQTLPIRV (80 aa)) form the SAM domain. Residues 498 to 500 (IRV) carry the PDZ-binding motif.

The protein belongs to the protein kinase superfamily. Tyr protein kinase family. Ephrin receptor subfamily. As to quaternary structure, heterotetramer upon binding of the ligand. The heterotetramer is composed of an ephrin dimer and a receptor dimer. Oligomerization is probably required to induce biological responses. In terms of processing, phosphorylated. Autophosphorylates upon ligand-binding. Autophosphorylation on Tyr-168 is required for interaction with SH2 domain-containing proteins. As to expression, widely expressed in the developing nervous system.

The protein resides in the cell membrane. It localises to the cell projection. Its subcellular location is the dendrite. The enzyme catalyses L-tyrosyl-[protein] + ATP = O-phospho-L-tyrosyl-[protein] + ADP + H(+). Receptor tyrosine kinase which binds promiscuously transmembrane ephrin-B family ligands residing on adjacent cells, leading to contact-dependent bidirectional signaling into neighboring cells. The signaling pathway downstream of the receptor is referred to as forward signaling while the signaling pathway downstream of the ephrin ligand is referred to as reverse signaling. Generally has an overlapping and redundant function with EPHB2. Like EPHB2, functions in axon guidance during development. In addition to its role in axon guidance also plays an important redundant role with other ephrin-B receptors in development and maturation of dendritic spines and the formation of excitatory synapses. May control other aspects of development through regulation of cell migration and positioning. May play a role in early pattern formation within the developing nervous system. This is Ephrin type-B receptor 3 (ephb3) from Danio rerio (Zebrafish).